The following is an 874-amino-acid chain: Alanine--tRNA ligase (874 aa).

Positions 564, 568, 665, and 669 each coordinate Zn(2+).

It belongs to the class-II aminoacyl-tRNA synthetase family. Zn(2+) serves as cofactor.

The protein resides in the cytoplasm. It catalyses the reaction tRNA(Ala) + L-alanine + ATP = L-alanyl-tRNA(Ala) + AMP + diphosphate. In terms of biological role, catalyzes the attachment of alanine to tRNA(Ala) in a two-step reaction: alanine is first activated by ATP to form Ala-AMP and then transferred to the acceptor end of tRNA(Ala). Also edits incorrectly charged Ser-tRNA(Ala) and Gly-tRNA(Ala) via its editing domain. The polypeptide is Alanine--tRNA ligase (Burkholderia orbicola (strain MC0-3)).